We begin with the raw amino-acid sequence, 199 residues long: Golgi to ER traffic protein 1 (199 aa).

The Lumenal segment spans residues 1–11; sequence MLLPDLHPYTI. Residues 12–31 traverse the membrane as a helical segment; the sequence is LLSIFIVLLLKQLVASIGKS. Residues 32 to 115 lie on the Cytoplasmic side of the membrane; sequence TIKEFVWLVY…SIDKVSNALL (84 aa). The stretch at 66-116 forms a coiled coil; it reads EKRAISAQDEYAKWTKLNRQADKLSAELQKLNQEIQQQKASIDKVSNALLL. Residues 116 to 136 form a helical membrane-spanning segment; it reads LVLTTLPIWVARVLYRNTHLF. Residues 137 to 160 lie on the Lumenal side of the membrane; that stretch reads YIRQGIFPKYVEWVLALPFLPNGA. The helical transmembrane segment at 161-177 threads the bilayer; that stretch reads VGLTIWMFAVNSVVSNF. The Cytoplasmic portion of the chain corresponds to 178–199; sequence AFLVSFPFAKKVSKPVRDTKIE.

This sequence belongs to the WRB/GET1 family. As to quaternary structure, component of the Golgi to ER traffic (GET) complex, which is composed of GET1, GET2 and GET3. Within the complex, GET1 and GET2 form a heterotetramer which is stabilized by phosphatidylinositol binding and which binds to the GET3 homodimer.

The protein localises to the endoplasmic reticulum membrane. Its subcellular location is the golgi apparatus membrane. In terms of biological role, required for the post-translational delivery of tail-anchored (TA) proteins to the endoplasmic reticulum. Together with GET2, acts as a membrane receptor for soluble GET3, which recognizes and selectively binds the transmembrane domain of TA proteins in the cytosol. The GET complex cooperates with the HDEL receptor ERD2 to mediate the ATP-dependent retrieval of resident ER proteins that contain a C-terminal H-D-E-L retention signal from the Golgi to the ER. The polypeptide is Golgi to ER traffic protein 1 (Candida dubliniensis (strain CD36 / ATCC MYA-646 / CBS 7987 / NCPF 3949 / NRRL Y-17841) (Yeast)).